The chain runs to 417 residues: Gamma-glutamyl phosphate reductase (417 aa).

This sequence belongs to the gamma-glutamyl phosphate reductase family.

It is found in the cytoplasm. It carries out the reaction L-glutamate 5-semialdehyde + phosphate + NADP(+) = L-glutamyl 5-phosphate + NADPH + H(+). It functions in the pathway amino-acid biosynthesis; L-proline biosynthesis; L-glutamate 5-semialdehyde from L-glutamate: step 2/2. Functionally, catalyzes the NADPH-dependent reduction of L-glutamate 5-phosphate into L-glutamate 5-semialdehyde and phosphate. The product spontaneously undergoes cyclization to form 1-pyrroline-5-carboxylate. The polypeptide is Gamma-glutamyl phosphate reductase (Escherichia coli O157:H7).